Here is a 323-residue protein sequence, read N- to C-terminus: Beta-ketoacyl-[acyl-carrier-protein] synthase III (323 aa).

Active-site residues include cysteine 114 and histidine 250. Residues 251 to 255 (QANIR) are ACP-binding. Residue asparagine 280 is part of the active site.

The protein belongs to the thiolase-like superfamily. FabH family. As to quaternary structure, homodimer.

It is found in the cytoplasm. The enzyme catalyses malonyl-[ACP] + acetyl-CoA + H(+) = 3-oxobutanoyl-[ACP] + CO2 + CoA. It participates in lipid metabolism; fatty acid biosynthesis. In terms of biological role, catalyzes the condensation reaction of fatty acid synthesis by the addition to an acyl acceptor of two carbons from malonyl-ACP. Catalyzes the first condensation reaction which initiates fatty acid synthesis and may therefore play a role in governing the total rate of fatty acid production. Possesses both acetoacetyl-ACP synthase and acetyl transacylase activities. Its substrate specificity determines the biosynthesis of branched-chain and/or straight-chain of fatty acids. This chain is Beta-ketoacyl-[acyl-carrier-protein] synthase III, found in Roseobacter denitrificans (strain ATCC 33942 / OCh 114) (Erythrobacter sp. (strain OCh 114)).